Consider the following 118-residue polypeptide: Beta-2-microglobulin (118 aa).

The N-terminal stretch at 1-21 (MGSRWGIAVLGLFCFVSCLEA) is a signal peptide. In terms of domain architecture, Ig-like C1-type spans 26 to 113 (PKIQVYSRHP…VHEGVKKTVK (88 aa)). C46 and C101 are disulfide-bonded.

The protein belongs to the beta-2-microglobulin family. Heterodimer of an alpha chain and a beta chain. Beta-2-microglobulin is the beta-chain of major histocompatibility complex class I molecules.

The protein resides in the secreted. In terms of biological role, component of the class I major histocompatibility complex (MHC). Involved in the presentation of peptide antigens to the immune system. This Ornithorhynchus anatinus (Duckbill platypus) protein is Beta-2-microglobulin (B2M).